Consider the following 208-residue polypeptide: Imidazoleglycerol-phosphate dehydratase (208 aa).

The protein belongs to the imidazoleglycerol-phosphate dehydratase family.

It localises to the cytoplasm. It catalyses the reaction D-erythro-1-(imidazol-4-yl)glycerol 3-phosphate = 3-(imidazol-4-yl)-2-oxopropyl phosphate + H2O. It functions in the pathway amino-acid biosynthesis; L-histidine biosynthesis; L-histidine from 5-phospho-alpha-D-ribose 1-diphosphate: step 6/9. The chain is Imidazoleglycerol-phosphate dehydratase from Prochlorococcus marinus (strain MIT 9211).